Reading from the N-terminus, the 512-residue chain is Retinaldehyde dehydrogenase 3 (512 aa).

The tract at residues 1–23 is disordered; sequence MATANGAVENGQPDGKPPALPRP. The residue at position 2 (alanine 2) is an N-acetylalanine. NAD(+) contacts are provided by residues lysine 204, glutamate 207, and 257 to 262; that span reads GSTEVG. Residue glutamate 280 is the Proton acceptor of the active site. Catalysis depends on cysteine 314, which acts as the Nucleophile. NAD(+)-binding residues include glutamine 361 and glutamate 411.

This sequence belongs to the aldehyde dehydrogenase family. As to quaternary structure, homotetramer.

Its subcellular location is the cytoplasm. The catalysed reaction is all-trans-retinal + NAD(+) + H2O = all-trans-retinoate + NADH + 2 H(+). It carries out the reaction retinal + NAD(+) + H2O = retinoate + NADH + 2 H(+). It catalyses the reaction all-trans-13,14-dihydroretinal + NAD(+) + H2O = all-trans-13,14-dihydroretinoate + NADH + 2 H(+). It participates in cofactor metabolism; retinol metabolism. Catalyzes the NAD-dependent oxidation of aldehyde substrates, such as all-trans-retinal and all-trans-13,14-dihydroretinal, to their corresponding carboxylic acids, all-trans-retinoate and all-trans-13,14-dihydroretinoate, respectively. High specificity for all-trans-retinal as substrate, can also accept acetaldehyde as substrate in vitro but with lower affinity. Required for the biosynthesis of normal levels of retinoate in the embryonic ocular and nasal regions; a critical lipid in the embryonic development of the eye and the nasal region. The polypeptide is Retinaldehyde dehydrogenase 3 (Aldh1a3) (Rattus norvegicus (Rat)).